We begin with the raw amino-acid sequence, 184 residues long: dITP/XTP pyrophosphatase (184 aa).

8–13 provides a ligand contact to substrate; it reads TGNKGK. Positions 37 and 66 each coordinate Mg(2+). The active-site Proton acceptor is the Asp66. Substrate is bound by residues Ser67, 142 to 145, Lys163, and 168 to 169; these read FGYD and HR.

It belongs to the HAM1 NTPase family. As to quaternary structure, homodimer. Mg(2+) serves as cofactor.

The catalysed reaction is XTP + H2O = XMP + diphosphate + H(+). It carries out the reaction dITP + H2O = dIMP + diphosphate + H(+). It catalyses the reaction ITP + H2O = IMP + diphosphate + H(+). In terms of biological role, pyrophosphatase that catalyzes the hydrolysis of nucleoside triphosphates to their monophosphate derivatives, with a high preference for the non-canonical purine nucleotides XTP (xanthosine triphosphate), dITP (deoxyinosine triphosphate) and ITP. Seems to function as a house-cleaning enzyme that removes non-canonical purine nucleotides from the nucleotide pool, thus preventing their incorporation into DNA/RNA and avoiding chromosomal lesions. The sequence is that of dITP/XTP pyrophosphatase from Methanosarcina mazei (strain ATCC BAA-159 / DSM 3647 / Goe1 / Go1 / JCM 11833 / OCM 88) (Methanosarcina frisia).